The primary structure comprises 386 residues: 26S proteasome non-ATPase regulatory subunit 13 homolog B (386 aa).

Ala2 is modified (N-acetylalanine). Residues 174–347 (FSEFYKNALL…GTVYVSWAQP (174 aa)) enclose the PCI domain.

It belongs to the proteasome subunit S11 family. In terms of assembly, component of the 19S regulatory particle (RP/PA700) lid subcomplex of the 26S proteasome. The 26S proteasome is composed of a core protease (CP), known as the 20S proteasome, capped at one or both ends by the 19S regulatory particle (RP/PA700). The RP/PA700 complex is composed of at least 17 different subunits in two subcomplexes, the base and the lid, which form the portions proximal and distal to the 20S proteolytic core, respectively. In terms of tissue distribution, ubiquitous with highest expression in flowers.

Its function is as follows. Acts as a regulatory subunit of the 26S proteasome which is involved in the ATP-dependent degradation of ubiquitinated proteins. In Arabidopsis thaliana (Mouse-ear cress), this protein is 26S proteasome non-ATPase regulatory subunit 13 homolog B (RPN9B).